A 304-amino-acid polypeptide reads, in one-letter code: Transcription factor BEE 2 (304 aa).

A disordered region spans residues 74 to 132 (FHMEPVKNNGHSRAITLQNKRKPEGKTEKREKKKIKAEDETEPSMKGKSNMSNTETSSE). Over residues 82–91 (NGHSRAITLQ) the composition is skewed to polar residues. Over residues 94–103 (RKPEGKTEKR) the composition is skewed to basic and acidic residues. The span at 120–132 (GKSNMSNTETSSE) shows a compositional bias: polar residues. Residues 147–197 (EATDRHSLAERARREKISKKMKCLQDIVPGCNKVTGKAGMLDEIINYVQSL) enclose the bHLH domain.

Homodimer. Expressed in stems and flowers.

It is found in the nucleus. Its function is as follows. Positive regulator of brassinosteroid signaling. The chain is Transcription factor BEE 2 (BEE2) from Arabidopsis thaliana (Mouse-ear cress).